The following is a 133-amino-acid chain: MTLNLCVLTPNRIVWDSEVKEIILSTNSGQIGVLPNHAPIATSVDIGILRIRLNDQWLTMALMGGFARIGNNEITVLVNDAEKSGDIDPQEAQQTLEIAEAALRKAEGKRQTIEANLALRRARTRVEAINAIS.

The protein belongs to the ATPase epsilon chain family. F-type ATPases have 2 components, CF(1) - the catalytic core - and CF(0) - the membrane proton channel. CF(1) has five subunits: alpha(3), beta(3), gamma(1), delta(1), epsilon(1). CF(0) has three main subunits: a, b and c.

The protein resides in the plastid. It is found in the chloroplast thylakoid membrane. Its function is as follows. Produces ATP from ADP in the presence of a proton gradient across the membrane. The chain is ATP synthase epsilon chain, chloroplastic from Lactuca sativa (Garden lettuce).